We begin with the raw amino-acid sequence, 113 residues long: Hydrogenase maturation factor HybF (113 aa).

2 residues coordinate Ni(2+): histidine 2 and glutamate 3. Cysteine 73, cysteine 76, cysteine 89, and cysteine 92 together coordinate Zn(2+).

It belongs to the HypA/HybF family. HybF subfamily.

Its function is as follows. Involved in the maturation of [NiFe] hydrogenases. Required for nickel insertion into the metal center of the hydrogenase. The polypeptide is Hydrogenase maturation factor HybF (Salmonella typhi).